The following is a 198-amino-acid chain: Glycerol-3-phosphate acyltransferase (198 aa).

The next 5 helical transmembrane spans lie at 2–22 (IIVI…TGYL), 55–75 (MITQ…CMLI), 88–108 (YLSI…FLGF), 118–138 (VGAF…VYFV), and 162–182 (IALR…GLLI).

It belongs to the PlsY family. As to quaternary structure, probably interacts with PlsX.

The protein resides in the cell membrane. It carries out the reaction an acyl phosphate + sn-glycerol 3-phosphate = a 1-acyl-sn-glycero-3-phosphate + phosphate. It participates in lipid metabolism; phospholipid metabolism. Its function is as follows. Catalyzes the transfer of an acyl group from acyl-phosphate (acyl-PO(4)) to glycerol-3-phosphate (G3P) to form lysophosphatidic acid (LPA). This enzyme utilizes acyl-phosphate as fatty acyl donor, but not acyl-CoA or acyl-ACP. In Clostridium acetobutylicum (strain ATCC 824 / DSM 792 / JCM 1419 / IAM 19013 / LMG 5710 / NBRC 13948 / NRRL B-527 / VKM B-1787 / 2291 / W), this protein is Glycerol-3-phosphate acyltransferase.